Consider the following 120-residue polypeptide: Small ribosomal subunit protein uS13 (120 aa).

The interval H92–K120 is disordered. Residues A107 to K120 show a composition bias toward basic residues.

This sequence belongs to the universal ribosomal protein uS13 family. In terms of assembly, part of the 30S ribosomal subunit. Forms a loose heterodimer with protein S19. Forms two bridges to the 50S subunit in the 70S ribosome.

Located at the top of the head of the 30S subunit, it contacts several helices of the 16S rRNA. In the 70S ribosome it contacts the 23S rRNA (bridge B1a) and protein L5 of the 50S subunit (bridge B1b), connecting the 2 subunits; these bridges are implicated in subunit movement. Contacts the tRNAs in the A and P-sites. The polypeptide is Small ribosomal subunit protein uS13 (Helicobacter hepaticus (strain ATCC 51449 / 3B1)).